The primary structure comprises 266 residues: Glucosamine-6-phosphate deaminase (266 aa).

D72 (proton acceptor; for enolization step) is an active-site residue. Catalysis depends on D141, which acts as the For ring-opening step. Residue H143 is the Proton acceptor; for ring-opening step of the active site. The For ring-opening step role is filled by E148.

Belongs to the glucosamine/galactosamine-6-phosphate isomerase family. NagB subfamily. Homohexamer.

The enzyme catalyses alpha-D-glucosamine 6-phosphate + H2O = beta-D-fructose 6-phosphate + NH4(+). It functions in the pathway amino-sugar metabolism; N-acetylneuraminate degradation; D-fructose 6-phosphate from N-acetylneuraminate: step 5/5. With respect to regulation, allosterically activated by N-acetylglucosamine 6-phosphate (GlcNAc6P). Catalyzes the reversible isomerization-deamination of glucosamine 6-phosphate (GlcN6P) to form fructose 6-phosphate (Fru6P) and ammonium ion. This chain is Glucosamine-6-phosphate deaminase, found in Pectobacterium atrosepticum (strain SCRI 1043 / ATCC BAA-672) (Erwinia carotovora subsp. atroseptica).